The following is a 979-amino-acid chain: Collagen alpha-2(I) chain (979 aa).

The disordered stretch occupies residues 1–979 (SGGFDFSFLP…FGYEGDFYRA (979 aa)). A 4-hydroxyproline mark is found at Pro-10, Pro-13, Pro-35, and Pro-41. The span at 28-41 (LMGPRGPPGASGAP) shows a compositional bias: low complexity. A 5-hydroxylysine; alternate modification is found at Lys-88. Residue Lys-88 is glycosylated (O-linked (Gal...) hydroxylysine; alternate). The span at 128–157 (VGAPGPAGARGSDGSVGPVGPAGPIGSAGP) shows a compositional bias: low complexity. The span at 256-265 (GESGGKGEPG) shows a compositional bias: gly residues. Low complexity predominate over residues 266–276 (SAGPQGPPGSS). The segment covering 298 to 307 (GLRGGPGSRG) has biased composition (gly residues). A 4-hydroxyproline mark is found at Pro-341 and Pro-344. Residues 434–443 (GVQGGKGEQG) are compositionally biased toward gly residues. Composition is skewed to low complexity over residues 490–507 (PGESGAVGPSGAIGSRGP) and 519–529 (EPGVVGAPGTA). Residues 530–548 (GPAGSGGPGERGAAGIPGG) are compositionally biased toward gly residues. Low complexity-rich tracts occupy residues 570–599 (RGAPGAVGAPGPAGEAGAAGPAGPAGPRGS) and 606–626 (VGPAGPNGFAGPAGAAGQPGA). Basic and acidic residues predominate over residues 627-636 (KGERGTKGPK). A compositionally biased stretch (low complexity) spans 644–654 (PTGPVGSAGPA). Positions 664–673 (GSRGDGGPPG) are enriched in gly residues. Low complexity predominate over residues 675–684 (TGFPGAAGRT). Residues 721-730 (GETGAGGPPG) show a composition bias toward gly residues. Composition is skewed to low complexity over residues 738-765 (SGEPGTAGPPGTAGPQGLLGAPGILGLP) and 773-783 (LPGVAGAVGEP). Residues 784-802 (GPLGIGPPGARGPSGGDGL) show a composition bias toward gly residues. Low complexity-rich tracts occupy residues 811–833 (YAGNAGPVGAAGAPGPHGSVGPA) and 841–856 (EPGPVGSVGPVGALGP). A compositionally biased stretch (basic and acidic residues) spans 866–877 (RGDKGEPGDKGP). Positions 951–961 (GPGPPGPPGPP) are enriched in pro residues.

This sequence belongs to the fibrillar collagen family. Trimers of one alpha 2(I) and two alpha 1(I) chains. Interacts (via C-terminus) with TMEM131 (via PapD-L domain); the interaction is direct and is involved in assembly and TRAPPIII ER-to-Golgi transport complex-dependent secretion of collagen. Prolines at the third position of the tripeptide repeating unit (G-X-Y) are hydroxylated in some or all of the chains. Expressed in bones.

Its subcellular location is the secreted. The protein resides in the extracellular space. The protein localises to the extracellular matrix. In terms of biological role, type I collagen is a member of group I collagen (fibrillar forming collagen). The polypeptide is Collagen alpha-2(I) chain (Neocnus dousman (Slow ground sloth)).